Consider the following 446-residue polypeptide: Casein kinase I homolog 1 (446 aa).

Residues 12–274 form the Protein kinase domain; that stretch reads YKVGRRIGEG…FDATPDYDYL (263 aa). Residues 18-26 and K41 contribute to the ATP site; that span reads IGEGSFGVI. D131 functions as the Proton acceptor in the catalytic mechanism. The segment at 308-430 is disordered; the sequence is KSRNAETENQ…ETEAPKKKKS (123 aa). At S329 the chain carries Phosphoserine. Polar residues predominate over residues 332–345; it reads PALQNHASTQNVVS. The segment covering 346–355 has biased composition (basic and acidic residues); the sequence is KRSDYEKPFA. The span at 360–397 shows a compositional bias: polar residues; the sequence is NSASDSAEPNQNSLPNPPTETKATTTVPDRSGLATNQP. Over residues 401 to 412 the composition is skewed to basic and acidic residues; that stretch reads DVHDSSEERVTR.

It belongs to the protein kinase superfamily. CK1 Ser/Thr protein kinase family. Casein kinase I subfamily.

It is found in the cytoplasm. The enzyme catalyses L-seryl-[protein] + ATP = O-phospho-L-seryl-[protein] + ADP + H(+). The catalysed reaction is L-threonyl-[protein] + ATP = O-phospho-L-threonyl-[protein] + ADP + H(+). Functionally, casein kinases are operationally defined by their preferential utilization of acidic proteins such as caseins as substrates. The sequence is that of Casein kinase I homolog 1 (cki1) from Schizosaccharomyces pombe (strain 972 / ATCC 24843) (Fission yeast).